The chain runs to 45 residues: Large ribosomal subunit protein bL34 (45 aa).

It belongs to the bacterial ribosomal protein bL34 family.

This chain is Large ribosomal subunit protein bL34, found in Beutenbergia cavernae (strain ATCC BAA-8 / DSM 12333 / CCUG 43141 / JCM 11478 / NBRC 16432 / NCIMB 13614 / HKI 0122).